The chain runs to 126 residues: Aspartate 1-decarboxylase (126 aa).

Ser25 serves as the catalytic Schiff-base intermediate with substrate; via pyruvic acid. Residue Ser25 is modified to Pyruvic acid (Ser). A substrate-binding site is contributed by Thr57. The Proton donor role is filled by Tyr58. 73–75 (GAA) is a substrate binding site.

The protein belongs to the PanD family. Heterooctamer of four alpha and four beta subunits. Pyruvate is required as a cofactor. Post-translationally, is synthesized initially as an inactive proenzyme, which is activated by self-cleavage at a specific serine bond to produce a beta-subunit with a hydroxyl group at its C-terminus and an alpha-subunit with a pyruvoyl group at its N-terminus.

It is found in the cytoplasm. It carries out the reaction L-aspartate + H(+) = beta-alanine + CO2. The protein operates within cofactor biosynthesis; (R)-pantothenate biosynthesis; beta-alanine from L-aspartate: step 1/1. Catalyzes the pyruvoyl-dependent decarboxylation of aspartate to produce beta-alanine. The polypeptide is Aspartate 1-decarboxylase (Pectobacterium carotovorum subsp. carotovorum (strain PC1)).